A 521-amino-acid polypeptide reads, in one-letter code: AAA ATPase forming ring-shaped complexes (521 aa).

Positions 4–44 (TEDLAALNDRLMAKNHALAEALNRAGKELTKAKSRLAQLAQ) form a coiled coil. 235 to 240 (GNGKTM) serves as a coordination point for ATP.

The protein belongs to the AAA ATPase family. Homohexamer. Assembles into a hexameric ring structure.

This Bifidobacterium longum subsp. infantis (strain ATCC 15697 / DSM 20088 / JCM 1222 / NCTC 11817 / S12) protein is AAA ATPase forming ring-shaped complexes.